We begin with the raw amino-acid sequence, 299 residues long: Putative fructokinase (299 aa).

Thr-130 is an ATP binding site. Zn(2+) is bound by residues His-153, Cys-168, His-171, and Cys-174. ATP is bound by residues Pro-182 and 230 to 234 (GVMQQ).

It belongs to the ROK (NagC/XylR) family. The cofactor is Mg(2+).

The enzyme catalyses D-fructose + ATP = D-fructose 6-phosphate + ADP + H(+). Its activity is regulated as follows. Inhibited by zinc ions. Its function is as follows. Seems to be involved in the degradation of glucomannan. The chain is Putative fructokinase (gmuE) from Bacillus subtilis (strain 168).